The following is a 118-amino-acid chain: V-type proton ATPase subunit G 2 (118 aa).

The disordered stretch occupies residues 25-90; the sequence is ARKRKARRLK…VQGMQSSQQR (66 aa). Positions 35-56 are enriched in basic and acidic residues; sequence QAKEEAQMEVEQYRREREHEFQ. Composition is skewed to polar residues over residues 57–69 and 78–89; these read SKQQ…QGNL and RRQVQGMQSSQQ.

The protein belongs to the V-ATPase G subunit family. In terms of assembly, V-ATPase is a heteromultimeric enzyme made up of two complexes: the ATP-hydrolytic V1 complex and the proton translocation V0 complex. The V1 complex consists of three catalytic AB heterodimers that form a heterohexamer, three peripheral stalks each consisting of EG heterodimers, one central rotor including subunits D and F, and the regulatory subunits C and H. The proton translocation complex V0 consists of the proton transport subunit a, a ring of proteolipid subunits c9c'', rotary subunit d, subunits e and f, and the accessory subunits ATP6AP1/Ac45 and ATP6AP2/PRR. As to expression, brain.

The protein resides in the melanosome. It is found in the cytoplasmic vesicle. The protein localises to the clathrin-coated vesicle membrane. Its function is as follows. Subunit of the V1 complex of vacuolar(H+)-ATPase (V-ATPase), a multisubunit enzyme composed of a peripheral complex (V1) that hydrolyzes ATP and a membrane integral complex (V0) that translocates protons. V-ATPase is responsible for acidifying and maintaining the pH of intracellular compartments and in some cell types, is targeted to the plasma membrane, where it is responsible for acidifying the extracellular environment. This Homo sapiens (Human) protein is V-type proton ATPase subunit G 2 (ATP6V1G2).